A 1344-amino-acid polypeptide reads, in one-letter code: Myb-binding protein 1A (1344 aa).

The disordered stretch occupies residues 1-24 (MAEMKSPTKAEPASPAEAPQGDRR). Ala-2 is modified (N-acetylalanine). An interaction with MYB region spans residues 2 to 580 (AEMKSPTKAE…WDQMMSTLKE (579 aa)). Ser-14 carries the phosphoserine modification. Residues Lys-69 and Lys-156 each carry the N6-acetyllysine modification. 2 consecutive short sequence motifs (nuclear export signal) follow at residues 238–256 (SEDN…ANSV) and 261–279 (KLPD…ENKF). Disordered regions lie at residues 696-752 (NEDE…DVDP) and 1150-1344 (PKSE…VQTP). Basic and acidic residues predominate over residues 708–730 (TDEKQLKHGEDADSDSEDSKNSE). Positions 731 to 746 (SDVDSEDGEESEEEDR) are enriched in acidic residues. The segment covering 1150-1161 (PKSEKKNVKDIP) has biased composition (basic and acidic residues). Residue Lys-1151 forms a Glycyl lysine isopeptide (Lys-Gly) (interchain with G-Cter in SUMO2) linkage. The segment at 1154-1344 (KKNVKDIPSD…RVARRRVQTP (191 aa)) is required for nuclear and nucleolar localization. A phosphoserine mark is found at Ser-1162 and Ser-1166. Over residues 1170 to 1187 (TKRKKKGFLPETKKRKKL) the composition is skewed to basic residues. The residue at position 1189 (Ser-1189) is a Phosphoserine. Thr-1193 carries the phosphothreonine modification. Residues Ser-1221 and Ser-1246 each carry the phosphoserine modification. Over residues 1247 to 1256 (PAPNNPTLSP) the composition is skewed to low complexity. The residue at position 1253 (Thr-1253) is a Phosphothreonine. A Phosphoserine modification is found at Ser-1255. Thr-1258 and Thr-1280 each carry phosphothreonine. 3 positions are modified to phosphoserine: Ser-1283, Ser-1305, and Ser-1318. The segment covering 1301-1316 (VKRRSSQSALPKKRAR) has biased composition (basic residues). Positions 1317 to 1329 (LSLVSRSPSLLQS) are enriched in low complexity. Arg-1322 carries the post-translational modification Citrulline. Phosphoserine occurs at positions 1323, 1325, and 1329. Residues 1331–1344 (IRKRRVARRRVQTP) show a composition bias toward basic residues.

This sequence belongs to the MYBBP1A family. Binds to and represses JUN and MYB via the leucine zipper regions present in these proteins. Also binds to and represses PPARGC1A: this interaction is abrogated when PPARGC1A is phosphorylated by MAPK1/ERK. Binds to and stimulates transcription by AHR. Binds to KPNA2. Component of the B-WICH complex, at least composed of SMARCA5/SNF2H, BAZ1B/WSTF, SF3B1, DEK, MYO1C, ERCC6, MYBBP1A and DDX21. Interacts with CLOCK and CRY1. In terms of processing, citrullinated by PADI4.

The protein localises to the nucleus. It is found in the nucleolus. The protein resides in the cytoplasm. Its function is as follows. May activate or repress transcription via interactions with sequence specific DNA-binding proteins. Repression may be mediated at least in part by histone deacetylase activity (HDAC activity). Acts as a corepressor and in concert with CRY1, represses the transcription of the core circadian clock component PER2. Preferentially binds to dimethylated histone H3 'Lys-9' (H3K9me2) on the PER2 promoter. Has a role in rRNA biogenesis together with PWP1. The protein is Myb-binding protein 1A (Mybbp1a) of Rattus norvegicus (Rat).